The primary structure comprises 185 residues: Elongation factor P (185 aa).

This sequence belongs to the elongation factor P family.

It localises to the cytoplasm. It participates in protein biosynthesis; polypeptide chain elongation. Functionally, involved in peptide bond synthesis. Stimulates efficient translation and peptide-bond synthesis on native or reconstituted 70S ribosomes in vitro. Probably functions indirectly by altering the affinity of the ribosome for aminoacyl-tRNA, thus increasing their reactivity as acceptors for peptidyl transferase. This Bacillus cereus (strain B4264) protein is Elongation factor P.